The primary structure comprises 370 residues: 4-hydroxy-3-methylbut-2-en-1-yl diphosphate synthase (flavodoxin) (370 aa).

[4Fe-4S] cluster-binding residues include C268, C271, C303, and E310.

This sequence belongs to the IspG family. The cofactor is [4Fe-4S] cluster.

It catalyses the reaction (2E)-4-hydroxy-3-methylbut-2-enyl diphosphate + oxidized [flavodoxin] + H2O + 2 H(+) = 2-C-methyl-D-erythritol 2,4-cyclic diphosphate + reduced [flavodoxin]. The protein operates within isoprenoid biosynthesis; isopentenyl diphosphate biosynthesis via DXP pathway; isopentenyl diphosphate from 1-deoxy-D-xylulose 5-phosphate: step 5/6. In terms of biological role, converts 2C-methyl-D-erythritol 2,4-cyclodiphosphate (ME-2,4cPP) into 1-hydroxy-2-methyl-2-(E)-butenyl 4-diphosphate. The chain is 4-hydroxy-3-methylbut-2-en-1-yl diphosphate synthase (flavodoxin) from Bacillus cereus (strain B4264).